Here is a 545-residue protein sequence, read N- to C-terminus: Capsular polysaccharide phosphotransferase SacB (545 aa).

The protein belongs to the stealth family.

Functionally, may be the polymerase that links individual UDP-N-acetyl-D-mannosamine monomers. In serotype A the capsule is composed of repeated units of (alpha 1-6)-linked N-acetyl-D-mannosamine-1-phosphate. This Neisseria meningitidis serogroup A protein is Capsular polysaccharide phosphotransferase SacB (sacB).